The primary structure comprises 71 residues: Large ribosomal subunit protein uL29 (71 aa).

Belongs to the universal ribosomal protein uL29 family.

The protein is Large ribosomal subunit protein uL29 (rpl29) of Halobacterium salinarum (strain ATCC 700922 / JCM 11081 / NRC-1) (Halobacterium halobium).